The primary structure comprises 629 residues: RNA polymerase sigma factor RpoD (629 aa).

A disordered region spans residues 183 to 228 (HNGLDEDFSDEDDEEESSNADVEDNEDEEDNESESTSDSSDSDNSI). The segment covering 187-228 (DEDFSDEDDEEESSNADVEDNEDEEDNESESTSDSSDSDNSI) has biased composition (acidic residues). The tract at residues 395-465 (MVEANLRLVI…TRSIADQART (71 aa)) is sigma-70 factor domain-2. Positions 419–422 (DLIQ) match the Interaction with polymerase core subunit RpoC motif. A sigma-70 factor domain-3 region spans residues 474–550 (ETINKLNRIS…DSTLELPLDS (77 aa)). Positions 563 to 616 (VLEGLTPREAKVLRMRFGIDMNTDHTLEEVGKQFDVTRERIRQIEAKALRKLRH) are sigma-70 factor domain-4. A DNA-binding region (H-T-H motif) is located at residues 589 to 608 (LEEVGKQFDVTRERIRQIEA).

The protein belongs to the sigma-70 factor family. RpoD/SigA subfamily. As to quaternary structure, interacts transiently with the RNA polymerase catalytic core.

The protein localises to the cytoplasm. Its function is as follows. Sigma factors are initiation factors that promote the attachment of RNA polymerase to specific initiation sites and are then released. This sigma factor is the primary sigma factor during exponential growth. The chain is RNA polymerase sigma factor RpoD from Haemophilus influenzae (strain ATCC 51907 / DSM 11121 / KW20 / Rd).